Reading from the N-terminus, the 225-residue chain is Enolase-phosphatase E1 (225 aa).

It belongs to the HAD-like hydrolase superfamily. MasA/MtnC family. As to quaternary structure, monomer. Mg(2+) serves as cofactor.

The catalysed reaction is 5-methylsulfanyl-2,3-dioxopentyl phosphate + H2O = 1,2-dihydroxy-5-(methylsulfanyl)pent-1-en-3-one + phosphate. It participates in amino-acid biosynthesis; L-methionine biosynthesis via salvage pathway; L-methionine from S-methyl-5-thio-alpha-D-ribose 1-phosphate: step 3/6. It functions in the pathway amino-acid biosynthesis; L-methionine biosynthesis via salvage pathway; L-methionine from S-methyl-5-thio-alpha-D-ribose 1-phosphate: step 4/6. Bifunctional enzyme that catalyzes the enolization of 2,3-diketo-5-methylthiopentyl-1-phosphate (DK-MTP-1-P) into the intermediate 2-hydroxy-3-keto-5-methylthiopentenyl-1-phosphate (HK-MTPenyl-1-P), which is then dephosphorylated to form the acireductone 1,2-dihydroxy-3-keto-5-methylthiopentene (DHK-MTPene). The polypeptide is Enolase-phosphatase E1 (Shewanella woodyi (strain ATCC 51908 / MS32)).